Reading from the N-terminus, the 682-residue chain is Cyclic nucleotide-gated cation channel (682 aa).

The disordered stretch occupies residues 1–41; sequence MTGQAALERSVSSHRLSVRSRLEGEAERAESAISRTDGDDD. At 1-136 the chain is on the cytoplasmic side; sequence MTGQAALERS…EGFVVSQSDD (136 aa). Basic and acidic residues predominate over residues 20-30; the sequence is SRLEGEAERAE. Residues 137–157 traverse the membrane as a helical segment; it reads IYYYWLFFIALASLYNWIMLV. The Extracellular portion of the chain corresponds to 158–169; the sequence is ARACFDQLQDEN. A helical membrane pass occupies residues 170 to 190; it reads FFLWVGLDYLCDVIYILDTCI. The Cytoplasmic portion of the chain corresponds to 191-218; it reads RLRTGYLEQGLLVKDLAKLRDNYIRTLQ. The chain crosses the membrane as a helical span at residues 219-239; it reads FKLDFLSILPTELLFFVTGYV. Topologically, residues 240–272 are extracellular; it reads PQLRFNRLLRFSRMFEFFDRTETRTNYPNAFRI. A helical membrane pass occupies residues 273–293; that stretch reads CNLILYILVIIHWNACIYYAI. The Cytoplasmic segment spans residues 294–311; the sequence is SKALGLSSDTWVYSGQNK. A helical transmembrane segment spans residues 312–332; sequence TLSFCYVYCFYWSTLTLTTIG. Residues 333–343 are Extracellular-facing; the sequence is EMPPPVKDEEY. The chain crosses the membrane as a helical span at residues 344 to 364; it reads VFVVFDFLVGVLIFATIVGNV. Residues 365 to 682 lie on the Cytoplasmic side of the membrane; it reads GSMIANMNAT…SAETNSEEET (318 aa). Residues 455–577, Glu-514, and Arg-529 contribute to the 3',5'-cyclic AMP site; that span reads LLVE…QGLL. Residues 649 to 682 are disordered; it reads GEHAGVPTHTHADIHAQPETHTRTSAETNSEEET. The segment covering 658–672 has biased composition (basic and acidic residues); it reads THADIHAQPETHTRT.

The protein belongs to the cyclic nucleotide-gated cation channel (TC 1.A.1.5) family. As to expression, olfactory neurons.

Its subcellular location is the membrane. In terms of biological role, this cyclic nucleotide-gated channel is activated equally well by both cAMP and cGMP. This chain is Cyclic nucleotide-gated cation channel, found in Ictalurus punctatus (Channel catfish).